Here is a 684-residue protein sequence, read N- to C-terminus: MLRNSIAPSRGLGSLARQRLTTSGRNLITKRSYVKGKSAAWPPGRSIASVLPARKTSCATFTTSATRGNEQNIRSPPSPSSASAISPEGISKPASSSPAGQTSPGSSVNSPEPPKAQTSAPPPPPPPPPPAPKAKGRFGRSLLYLVLTAGVAYAGGVWFSLRSDNFHDFFTEYVPYGEEAVLYFEELDFRRRFPNATRHINTRPAAPRDEGEKVTIPSKSGVSWKVAENEGTSDVTHKGRHMSAVDAEVPRTGGDAKSAPNKPTTEDKKDSEKTGSKKDESKERVPVTDTKKSTVSLDEPRKPAVATVASIEPLASLQDDPIIQELTKIVNGLIAVINADESASKLAAPIAKAKDDFLKLGEQISSIKKEAHAAAQEEIKNAHKEFERSATELVRRIDEVRSEEAAEYREEFETEREKLANSYQEKIKTEVERANAVAEQRLRNELVEQAIELNRKFLSDVDTLVEKERQGRFSKLSELSAQVAELEKLTAGWNEVIGANLTTQQLQVAVDAVHSALESESMPRPFINELLAVKSLAGQDPIVNAAISSINPTAYQRGIPSTAQIIDRFRRVANEVRKASLLPEDAGVASHATSYLMSKVMFKKEASSSGDDVESILTRTEKLLEQGNLDDAAREMNALRGWSKLLSKDWLADVRRVLEVRQALEVCFLSLLPTLSLLIYYNEC.

The N-terminal 11 residues, 1-11, are a transit peptide targeting the mitochondrion; sequence MLRNSIAPSRG. At 12-140 the chain is on the mitochondrial matrix side; that stretch reads LGSLARQRLT…APKAKGRFGR (129 aa). Composition is skewed to polar residues over residues 61–74 and 93–110; these read FTTS…QNIR and PASS…SVNS. The tract at residues 61 to 135 is disordered; that stretch reads FTTSATRGNE…PPPPPAPKAK (75 aa). Residues 120-132 are compositionally biased toward pro residues; the sequence is APPPPPPPPPPAP. A helical membrane pass occupies residues 141-161; the sequence is SLLYLVLTAGVAYAGGVWFSL. The Mitochondrial intermembrane segment spans residues 162–684; the sequence is RSDNFHDFFT…LSLLIYYNEC (523 aa). A disordered region spans residues 200–301; it reads INTRPAAPRD…KSTVSLDEPR (102 aa). Residues 264–301 show a composition bias toward basic and acidic residues; that stretch reads TTEDKKDSEKTGSKKDESKERVPVTDTKKSTVSLDEPR. The stretch at 367 to 445 forms a coiled coil; the sequence is IKKEAHAAAQ…AVAEQRLRNE (79 aa).

It belongs to the MICOS complex subunit Mic60 family. In terms of assembly, component of the mitochondrial contact site and cristae organizing system (MICOS) complex.

It is found in the mitochondrion inner membrane. Functionally, component of the MICOS complex, a large protein complex of the mitochondrial inner membrane that plays crucial roles in the maintenance of crista junctions, inner membrane architecture, and formation of contact sites to the outer membrane. Plays a role in keeping cristae membranes connected to the inner boundary membrane. Also promotes protein import via the mitochondrial intermembrane space assembly (MIA) pathway. In Arthroderma benhamiae (strain ATCC MYA-4681 / CBS 112371) (Trichophyton mentagrophytes), this protein is MICOS complex subunit MIC60 (MIC60).